A 387-amino-acid chain; its full sequence is Phosphoglycerate kinase (387 aa).

Substrate contacts are provided by residues Asp-21–Asn-23, Arg-36, His-59–Arg-62, Arg-113, and Arg-146. ATP-binding positions include Lys-197, Glu-314, and Gly-340 to Thr-343.

This sequence belongs to the phosphoglycerate kinase family. In terms of assembly, monomer.

It localises to the cytoplasm. It carries out the reaction (2R)-3-phosphoglycerate + ATP = (2R)-3-phospho-glyceroyl phosphate + ADP. It participates in carbohydrate degradation; glycolysis; pyruvate from D-glyceraldehyde 3-phosphate: step 2/5. The chain is Phosphoglycerate kinase from Sodalis glossinidius (strain morsitans).